We begin with the raw amino-acid sequence, 145 residues long: Large ribosomal subunit protein uL11 (145 aa).

Belongs to the universal ribosomal protein uL11 family. In terms of assembly, part of the ribosomal stalk of the 50S ribosomal subunit. Interacts with L10 and the large rRNA to form the base of the stalk. L10 forms an elongated spine to which L12 dimers bind in a sequential fashion forming a multimeric L10(L12)X complex. In terms of processing, one or more lysine residues are methylated.

Forms part of the ribosomal stalk which helps the ribosome interact with GTP-bound translation factors. The chain is Large ribosomal subunit protein uL11 from Persephonella marina (strain DSM 14350 / EX-H1).